Reading from the N-terminus, the 427-residue chain is Enolase (427 aa).

Q163 serves as a coordination point for (2R)-2-phosphoglycerate. The active-site Proton donor is E205. 3 residues coordinate Mg(2+): D242, E285, and D312. The (2R)-2-phosphoglycerate site is built by K337, R366, S367, and K388. The active-site Proton acceptor is K337.

This sequence belongs to the enolase family. It depends on Mg(2+) as a cofactor.

The protein localises to the cytoplasm. Its subcellular location is the secreted. It localises to the cell surface. It catalyses the reaction (2R)-2-phosphoglycerate = phosphoenolpyruvate + H2O. Its pathway is carbohydrate degradation; glycolysis; pyruvate from D-glyceraldehyde 3-phosphate: step 4/5. Catalyzes the reversible conversion of 2-phosphoglycerate (2-PG) into phosphoenolpyruvate (PEP). It is essential for the degradation of carbohydrates via glycolysis. The sequence is that of Enolase from Burkholderia orbicola (strain MC0-3).